Consider the following 380-residue polypeptide: Kappa-type opioid receptor (380 aa).

At 1-57 the chain is on the extracellular side; the sequence is MESPIQIFRGEPGPTCAPSACLLPNSSSWFPNWAESDSNGSVGSEDQQLEPAHISPA. 2 N-linked (GlcNAc...) asparagine glycosylation sites follow: Asn25 and Asn39. The chain crosses the membrane as a helical span at residues 58 to 85; that stretch reads IPVIITAVYSVVFVVGLVGNSLVMFVII. The Cytoplasmic portion of the chain corresponds to 86–95; the sequence is RYTKMKTATN. The helical transmembrane segment at 96–119 threads the bilayer; sequence IYIFNLALADALVTTTMPFQSAVY. Residues 120-132 lie on the Extracellular side of the membrane; the sequence is LMNSWPFGDVLCK. The cysteines at positions 131 and 210 are disulfide-linked. Residues 133–154 form a helical membrane-spanning segment; it reads IVISIDYYNMFTSIFTLTMMSV. The Cytoplasmic segment spans residues 155-173; that stretch reads DRYIAVCHPVKALDFRTPL. Residues 174-196 form a helical membrane-spanning segment; it reads KAKIINICIWLLASSVGISAIVL. At 197-222 the chain is on the extracellular side; it reads GGTKVREDVDVIECSLQFPDDEYSWW. The chain crosses the membrane as a helical span at residues 223–247; sequence DLFMKICVFVFAFVIPVLIIIVCYT. Residues 248-274 lie on the Cytoplasmic side of the membrane; it reads LMILRLKSVRLLSGSREKDRNLRRITK. Residues 275 to 296 form a helical membrane-spanning segment; it reads LVLVVVAVFIICWTPIHIFILV. At 297–311 the chain is on the extracellular side; it reads EALGSTSHSTAVLSS. A helical transmembrane segment spans residues 312–333; that stretch reads YYFCIALGYTNSSLNPVLYAFL. Residues 334 to 380 are Cytoplasmic-facing; it reads DENFKRCFRDFCFPIKMRMERQSTNRVRNTVQDPASMRDVGGMNKPV. The S-palmitoyl cysteine moiety is linked to residue Cys345.

This sequence belongs to the G-protein coupled receptor 1 family. In terms of assembly, interacts with NHERF1. Interacts with GABARAPL1.

Its subcellular location is the cell membrane. G-protein coupled opioid receptor that functions as a receptor for endogenous alpha-neoendorphins and dynorphins, but has low affinity for beta-endorphins. Also functions as a receptor for various synthetic opioids and for the psychoactive diterpene salvinorin A. Ligand binding causes a conformation change that triggers signaling via guanine nucleotide-binding proteins (G proteins) and modulates the activity of down-stream effectors, such as adenylate cyclase. Signaling leads to the inhibition of adenylate cyclase activity. Inhibits neurotransmitter release by reducing calcium ion currents and increasing potassium ion conductance. Plays a role in the perception of pain. Plays a role in mediating reduced physical activity upon treatment with synthetic opioids. Plays a role in the regulation of salivation in response to synthetic opioids. May play a role in arousal and regulation of autonomic and neuroendocrine functions. The polypeptide is Kappa-type opioid receptor (Oprk1) (Rattus norvegicus (Rat)).